Here is a 345-residue protein sequence, read N- to C-terminus: Protein-glutamate methylesterase/protein-glutamine glutaminase 1 (345 aa).

One can recognise a Response regulatory domain in the interval 8–123; sequence SVLVIDDSAH…FEAMEALRVE (116 aa). Aspartate 59 carries the post-translational modification 4-aspartylphosphate. The CheB-type methylesterase domain maps to 151 to 344; sequence AGEPPLVVAV…PALAALARRR (194 aa). Catalysis depends on residues serine 163, histidine 190, and aspartate 286.

It belongs to the CheB family. In terms of processing, phosphorylated by CheA. Phosphorylation of the N-terminal regulatory domain activates the methylesterase activity.

The protein resides in the cytoplasm. It catalyses the reaction [protein]-L-glutamate 5-O-methyl ester + H2O = L-glutamyl-[protein] + methanol + H(+). The catalysed reaction is L-glutaminyl-[protein] + H2O = L-glutamyl-[protein] + NH4(+). In terms of biological role, involved in chemotaxis. Part of a chemotaxis signal transduction system that modulates chemotaxis in response to various stimuli. Catalyzes the demethylation of specific methylglutamate residues introduced into the chemoreceptors (methyl-accepting chemotaxis proteins or MCP) by CheR. Also mediates the irreversible deamidation of specific glutamine residues to glutamic acid. This is Protein-glutamate methylesterase/protein-glutamine glutaminase 1 from Myxococcus xanthus (strain DK1622).